A 171-amino-acid chain; its full sequence is Small ribosomal subunit protein bS16 (171 aa).

The segment at 114-171 is disordered; that stretch reads EGGPTTEAAKPKKKAATSGAKKAAKAAEPEAAASEAAEPEAAAAPAEGGEQAESSAES. Over residues 142 to 171 the composition is skewed to low complexity; it reads PEAAASEAAEPEAAAAPAEGGEQAESSAES.

Belongs to the bacterial ribosomal protein bS16 family.

The sequence is that of Small ribosomal subunit protein bS16 from Mycolicibacterium paratuberculosis (strain ATCC BAA-968 / K-10) (Mycobacterium paratuberculosis).